The sequence spans 261 residues: Hydrolase in agr operon (261 aa).

Positions 1 to 239 (MKVQIYQLPI…ADILTVDLNL (239 aa)) constitute a CN hydrolase domain. The active-site Proton acceptor is E41. K110 acts as the Proton donor in catalysis. C146 (nucleophile) is an active-site residue.

The protein belongs to the carbon-nitrogen hydrolase superfamily. NIT1/NIT2 family.

The chain is Hydrolase in agr operon from Staphylococcus aureus.